An 839-amino-acid chain; its full sequence is LPS-assembly protein LptD (839 aa).

Residues 1-21 (MAIGITACVLSLINYQGLAYS) form the signal peptide.

The protein belongs to the LptD family. In terms of assembly, component of the lipopolysaccharide transport and assembly complex. Interacts with LptE and LptA.

It is found in the cell outer membrane. In terms of biological role, together with LptE, is involved in the assembly of lipopolysaccharide (LPS) at the surface of the outer membrane. The chain is LPS-assembly protein LptD from Legionella pneumophila (strain Lens).